A 464-amino-acid chain; its full sequence is UDP-glycosyltransferase 76C1 (464 aa).

Residues Ser-279, 338 to 340 (APQ), 355 to 363 (HNGWNSTLE), and 377 to 380 (KWDQ) each bind UDP-alpha-D-glucose.

The protein belongs to the UDP-glycosyltransferase family.

With respect to regulation, inhibited by olomoucine and 3-isobutyl-1-methylxanthine. Its function is as follows. Involved in the N-glucosylation of cytokinins. Catalyzes the formation of both the 7-N and the 9-N-glucosides. In Arabidopsis thaliana (Mouse-ear cress), this protein is UDP-glycosyltransferase 76C1 (UGT76C1).